Consider the following 224-residue polypeptide: MELYETSPYFYQEPRFYDGENYLPVHLQGFEPPGYERTELTLSPEAPGPLEDKGLGTPEHCPGQCLPWACKVCKRKSVSVDRRRAATLREKRRLKKVNEAFEALKRSTLLNPNQRLPKVEILRSAIQYIERLQALLSSLNQEERDLRYRGGGGPQPGVPSECSSHSASCSPEWGSALEFSANPGDHLLTADPTDAHNLHSLTSIVDSITVEDVSVAFPDETMPN.

Phosphoserine; by CaMK2G is present on residues S77 and S79. Positions 81–132 (DRRRAATLREKRRLKKVNEAFEALKRSTLLNPNQRLPKVEILRSAIQYIERL) constitute a bHLH domain. Phosphothreonine; by CaMK2G is present on T87.

In terms of assembly, homodimer and heterodimer with E12; heterodimerization enhances MYOG DNA-binding and transcriptional activities. Interacts with SMARCA4/BRG1/BAF190A. Interacts (via C-terminal region) with SSRP1 and SUPT16H; the interaction is indicative of an interaction with the FACT complex. Interacts with CSRP3. Phosphorylated by CAMK2G on threonine and serine amino acids in a muscle activity-dependent manner. Phosphorylation of Thr-87 impairs both DNA-binding and trans-activation functions in contracting muscles.

The protein localises to the nucleus. Acts as a transcriptional activator that promotes transcription of muscle-specific target genes and plays a role in muscle differentiation, cell cycle exit and muscle atrophy. Essential for the development of functional embryonic skeletal fiber muscle differentiation. However is dispensable for postnatal skeletal muscle growth; phosphorylation by CAMK2G inhibits its transcriptional activity in respons to muscle activity. Required for the recruitment of the FACT complex to muscle-specific promoter regions, thus promoting gene expression initiation. During terminal myoblast differentiation, plays a role as a strong activator of transcription at loci with an open chromatin structure previously initiated by MYOD1. Together with MYF5 and MYOD1, co-occupies muscle-specific gene promoter core regions during myogenesis. Also cooperates with myocyte-specific enhancer factor MEF2D and BRG1-dependent recruitment of SWI/SNF chromatin-remodeling enzymes to alter chromatin structure at myogenic late gene promoters. Facilitates cell cycle exit during terminal muscle differentiation through the up-regulation of miR-20a expression, which in turn represses genes involved in cell cycle progression. Binds to the E-box containing (E1) promoter region of the miR-20a gene. Also plays a role in preventing reversal of muscle cell differentiation. Contributes to the atrophy-related gene expression in adult denervated muscles. Induces fibroblasts to differentiate into myoblasts. The polypeptide is Myogenin (MYOG) (Homo sapiens (Human)).